The primary structure comprises 222 residues: Protein GrpE (222 aa).

The protein belongs to the GrpE family. In terms of assembly, homodimer.

It is found in the cytoplasm. Functionally, participates actively in the response to hyperosmotic and heat shock by preventing the aggregation of stress-denatured proteins, in association with DnaK and GrpE. It is the nucleotide exchange factor for DnaK and may function as a thermosensor. Unfolded proteins bind initially to DnaJ; upon interaction with the DnaJ-bound protein, DnaK hydrolyzes its bound ATP, resulting in the formation of a stable complex. GrpE releases ADP from DnaK; ATP binding to DnaK triggers the release of the substrate protein, thus completing the reaction cycle. Several rounds of ATP-dependent interactions between DnaJ, DnaK and GrpE are required for fully efficient folding. This chain is Protein GrpE, found in Bartonella bacilliformis (strain ATCC 35685 / KC583 / Herrer 020/F12,63).